A 164-amino-acid polypeptide reads, in one-letter code: MVNSVVFFDITVDGKPLGRISIKLFADKILKTAENFRALSTGEKGFRYKGSCFHRIIPGFMCQGGDFTRHNGTGDKSIYGEKFDDENLIRKHTGSGILSMANAGPNTNGSQFFICAAKTEWLDGKHVAFGKVKERVNIVEAMEHFGYRNSKTSKKITIADCGQF.

Residues 7–163 (FFDITVDGKP…KKITIADCGQ (157 aa)) form the PPIase cyclophilin-type domain.

Belongs to the cyclophilin-type PPIase family. PPIase A subfamily. As to expression, highly expressed in brain, ovary and mammary gland. Moderately expressed in lung, salivary gland, kidney, skin, adipose tissue, intestine and spleen. Weakly expressed in skeletal muscle, liver and stomach. Expressed in pleiomorphic and undifferentiated liposarcomas, osteosarcomas and breast carcinomas.

It is found in the cytoplasm. It carries out the reaction [protein]-peptidylproline (omega=180) = [protein]-peptidylproline (omega=0). Functionally, PPIases accelerate the folding of proteins. It catalyzes the cis-trans isomerization of proline imidic peptide bonds in oligopeptides. This is Peptidyl-prolyl cis-trans isomerase A-like 4A from Homo sapiens (Human).